A 414-amino-acid polypeptide reads, in one-letter code: 5-aminolevulinate synthase (414 aa).

3 residues coordinate substrate: R22, S133, and K152. 3 residues coordinate pyridoxal 5'-phosphate: S185, H213, and T241. K244 is a catalytic residue. K244 bears the N6-(pyridoxal phosphate)lysine mark. Residues T273 and T274 each coordinate pyridoxal 5'-phosphate. Residue T359 participates in substrate binding.

It belongs to the class-II pyridoxal-phosphate-dependent aminotransferase family. As to quaternary structure, homodimer. It depends on pyridoxal 5'-phosphate as a cofactor.

The enzyme catalyses succinyl-CoA + glycine + H(+) = 5-aminolevulinate + CO2 + CoA. It participates in porphyrin-containing compound metabolism; protoporphyrin-IX biosynthesis; 5-aminolevulinate from glycine: step 1/1. The chain is 5-aminolevulinate synthase (hemA) from Rickettsia conorii (strain ATCC VR-613 / Malish 7).